Consider the following 547-residue polypeptide: Chaperonin GroEL (547 aa).

ATP contacts are provided by residues 30 to 33 (TLGP), lysine 51, 87 to 91 (DGTTT), glycine 415, and aspartate 495. The tract at residues 526–547 (KKDTPVPPMPGGGMGGMGGMDF) is disordered. The span at 536–547 (GGGMGGMGGMDF) shows a compositional bias: gly residues.

The protein belongs to the chaperonin (HSP60) family. In terms of assembly, forms a cylinder of 14 subunits composed of two heptameric rings stacked back-to-back. Interacts with the co-chaperonin GroES.

The protein localises to the cytoplasm. It carries out the reaction ATP + H2O + a folded polypeptide = ADP + phosphate + an unfolded polypeptide.. Functionally, together with its co-chaperonin GroES, plays an essential role in assisting protein folding. The GroEL-GroES system forms a nano-cage that allows encapsulation of the non-native substrate proteins and provides a physical environment optimized to promote and accelerate protein folding. The protein is Chaperonin GroEL of Bartonella henselae (strain ATCC 49882 / DSM 28221 / CCUG 30454 / Houston 1) (Rochalimaea henselae).